A 105-amino-acid polypeptide reads, in one-letter code: TPR repeat-containing protein PA0015 (105 aa).

2 TPR repeats span residues 17–50 and 52–84; these read ALLRFGLGKGYLDAGDAERAAEHLQRCVEQDPKY and AGWKLLGKARQAAGDLAGARQAWEQGLATAATH.

This chain is TPR repeat-containing protein PA0015, found in Pseudomonas aeruginosa (strain ATCC 15692 / DSM 22644 / CIP 104116 / JCM 14847 / LMG 12228 / 1C / PRS 101 / PAO1).